The sequence spans 373 residues: Ferroptosis suppressor protein 1 (373 aa).

The N-myristoyl glycine moiety is linked to residue Gly-2. A helical transmembrane segment spans residues Val-7–Ala-27. 6-hydroxy-FAD is bound by residues Gly-18 to Gly-22, Arg-54, and Val-82. The residue at position 168 (Lys-168) is an N6-acetyllysine; by KAT2B. Asp-285 is a 6-hydroxy-FAD binding site.

Belongs to the FAD-dependent oxidoreductase family. Interacts with importin subunits KPNA2 and IPO5; this interaction likely mediates the translocation into the nucleus upon oxidative stress. The cofactor is 6-hydroxy-FAD. Post-translationally, N-myristoylation at Gly-2 mediates the recruitment to lipid droplets and plasma membrane, enabling its anti-lipid peroxidation activity. In terms of processing, acetylation at Lys-168 prevents AIFM2 ubiquitination and degradation, thereby inhibiting ferroptosis. KAT2B mediates acetylation at Lys-168, while HDAC3 removes it. Ubiquitinated. AIFM2 undergoes 'Lys-29'-ubiquitination and proteasomal degradation, which is inhibited by acetylation at Lys-168. In terms of tissue distribution, detected in most normal tissues as two transcripts of 1.8 and 4.0 kb in length, respectively. Highly expressed in heart, moderately in liver and skeletal muscles, and expressed at low levels in placenta, lung, kidney, and pancreas. Both transcripts expressed following p53/TP53 induction. The shorter 1.8 kb transcript seems to be the major transcript in EB1 colon cancer cells.

It localises to the lipid droplet. It is found in the cell membrane. The protein resides in the cytoplasm. The protein localises to the mitochondrion membrane. Its subcellular location is the nucleus. The enzyme catalyses ubiquinone-10 + NADH + H(+) = ubiquinol-10 + NAD(+). It catalyses the reaction phylloquinone + NADH + H(+) = phylloquinol + NAD(+). The catalysed reaction is menaquinone-4 + NADH + H(+) = menaquinol-4 + NAD(+). It carries out the reaction menadione + NADH + H(+) = menadiol + NAD(+). Its activity is regulated as follows. The modification by 4-hydroxy-2-nonenal (HNE) adduction in mitochondria results in loss of the oxidoreductase activity and activation of a novel function in mitochondrial oxidative stress signaling. Functionally, a NAD(P)H-dependent oxidoreductase that acts as a key inhibitor of ferroptosis. At the plasma membrane, catalyzes reduction of coenzyme Q/ubiquinone-10 to ubiquinol-10, a lipophilic radical-trapping antioxidant that prevents lipid oxidative damage and consequently ferroptosis. Acts in parallel to GPX4 to suppress phospholipid peroxidation and ferroptosis. This anti-ferroptotic function is independent of cellular glutathione levels. Also acts as a potent radical-trapping antioxidant by mediating warfarin-resistant vitamin K reduction in the canonical vitamin K cycle: catalyzes NAD(P)H-dependent reduction of vitamin K (phylloquinone, menaquinone-4 and menadione) to hydroquinone forms. Hydroquinones act as potent radical-trapping antioxidants inhibitor of phospholipid peroxidation and ferroptosis. May play a role in mitochondrial stress signaling. Upon oxidative stress, associates with the lipid peroxidation end product 4-hydroxy-2-nonenal (HNE) forming a lipid adduct devoid of oxidoreductase activity, which then translocates from mitochondria into the nucleus triggering DNA damage and cell death. Capable of DNA binding in a non-sequence specific way. This is Ferroptosis suppressor protein 1 from Homo sapiens (Human).